The primary structure comprises 280 residues: uncharacterized protein (280 aa).

Positions 1–21 are cleaved as a signal peptide; the sequence is MRPAIKVGLSTASVYPLRAEA.

It to M.leprae ML2432 and S.coelicolor SCO3347.

This is an uncharacterized protein from Mycobacterium tuberculosis (strain CDC 1551 / Oshkosh).